The primary structure comprises 82 residues: Pigment-dispersing hormone peptides (82 aa).

The first 26 residues, 1-26, serve as a signal peptide directing secretion; sequence MIGKYLSWFMLAFLFGFVLESYRVQS. Ala-80 carries the alanine amide modification.

The protein belongs to the arthropod PDH family. Expressed strongly in the head and weakly in the ventral nerve cord. Not detected in the midgut cecum or hindgut. In the cephalic neural complex, specifically localized to cells within the optic lobe, anteromedian protocerebrum, accessory lobe, tritocerebrum, and subesophageal ganglion.

The protein resides in the secreted. The pigment-dispersing hormone causes the migration of the distal retinal pigment into the proximal end of the pigment chromatophore cells and thus decreases the amount of light entering the retinulas. May also function as a neurotransmitter and/or neuromodulator. The polypeptide is Pigment-dispersing hormone peptides (Armadillidium vulgare (Pillbug)).